Reading from the N-terminus, the 2197-residue chain is Activating signal cointegrator 1 complex subunit 3 (2197 aa).

Ser-12 carries the post-translational modification Phosphoserine. Coiled coils occupy residues 18–80 (KQDN…AKQI) and 328–356 (IQSEQEKQLMKQYRREEKRIARREKKAGE). Residues 487–670 (DTAYNTNENM…FLHVNPYIGL (184 aa)) enclose the Helicase ATP-binding 1 domain. 500-507 (APTGAGKT) is an ATP binding site. At Lys-573 the chain carries N6-acetyllysine. A DEVH box motif is present at residues 612–615 (DEVH). Residues 697–915 (QLNNMDEVCY…GTVTNVEEAV (219 aa)) form the Helicase C-terminal 1 domain. In terms of domain architecture, SEC63 1 spans 979–1288 (STDLGRTASH…GAEAVCIINF (310 aa)). The Helicase ATP-binding 2 domain occupies 1337-1512 (HTLYHTDCNV…WLNIKQMGLF (176 aa)). Position 1350-1357 (1350-1357 (APTGSGKT)) interacts with ATP. Positions 1454 to 1457 (DEIH) match the DEIH box motif. Residues 1565–1739 (RMLSSMTKLE…VLSDHLNAEI (175 aa)) form the Helicase C-terminal 2 domain. Residues 1812–2175 (PLTCGRIASY…YLGLDQQYDI (364 aa)) enclose the SEC63 2 domain.

This sequence belongs to the helicase family. As to quaternary structure, identified in the ASCC complex that contains ASCC1, ASCC2 and ASCC3. Functions as a scaffolding subunit that interacts directly with both ASCC1 and ASCC2. Interacts directly with ALKBH3, and thereby recruits ALKBH3 to the ASCC complex. Part of the ASC-1/TRIP4 complex, that contains TRIP4, ASCC1, ASCC2 and ASCC3. Part of the RQT (ribosome quality control trigger) complex, that contains ASCC2, ASCC3 and TRIP4. Associates with ribosomes; recruited to collided ribosomes. Interacts with ZCCHC4. Interacts with ZNF598. Interacts with RPS3.

It localises to the nucleus. Its subcellular location is the nucleus speckle. The protein resides in the cytoplasm. It is found in the cytosol. The enzyme catalyses Couples ATP hydrolysis with the unwinding of duplex DNA by translocating in the 3'-5' direction.. It catalyses the reaction ATP + H2O = ADP + phosphate + H(+). In terms of biological role, ATPase involved both in DNA repair and rescue of stalled ribosomes. 3'-5' DNA helicase involved in repair of alkylated DNA: promotes DNA unwinding to generate single-stranded substrate needed for ALKBH3, enabling ALKBH3 to process alkylated N3-methylcytosine (3mC) within double-stranded regions. Also involved in activation of the ribosome quality control (RQC) pathway, a pathway that degrades nascent peptide chains during problematic translation. Drives the splitting of stalled ribosomes that are ubiquitinated in a ZNF598-dependent manner, as part of the ribosome quality control trigger (RQT) complex. Part of the ASC-1 complex that enhances NF-kappa-B, SRF and AP1 transactivation. The protein is Activating signal cointegrator 1 complex subunit 3 (Ascc3) of Rattus norvegicus (Rat).